A 350-amino-acid chain; its full sequence is Histidinol-phosphate aminotransferase 2 (350 aa).

Position 210 is an N6-(pyridoxal phosphate)lysine (Lys-210).

It belongs to the class-II pyridoxal-phosphate-dependent aminotransferase family. Histidinol-phosphate aminotransferase subfamily. Homodimer. Pyridoxal 5'-phosphate serves as cofactor.

The enzyme catalyses L-histidinol phosphate + 2-oxoglutarate = 3-(imidazol-4-yl)-2-oxopropyl phosphate + L-glutamate. Its pathway is amino-acid biosynthesis; L-histidine biosynthesis; L-histidine from 5-phospho-alpha-D-ribose 1-diphosphate: step 7/9. The protein is Histidinol-phosphate aminotransferase 2 of Mannheimia succiniciproducens (strain KCTC 0769BP / MBEL55E).